A 61-amino-acid chain; its full sequence is Metallothionein-1C (61 aa).

A beta region spans residues 1-29 (MDPNCSCSTGSSCSCAGSCTCKACRCPSC). The a divalent metal cation site is built by Cys5, Cys7, Cys13, Cys15, Cys19, Cys21, Cys24, Cys26, Cys29, Cys33, Cys34, Cys36, Cys37, Cys41, Cys44, Cys48, Cys50, Cys57, Cys59, and Cys60. The tract at residues 30–61 (KKSCCSCCPVGCAKCAQGCICKGASDKCSCCA) is alpha.

It belongs to the metallothionein superfamily. Type 1 family.

In terms of biological role, metallothioneins have a high content of cysteine residues that bind various heavy metals; these proteins are transcriptionally regulated by both heavy metals and glucocorticoids. This is Metallothionein-1C (MT1C) from Ovis aries (Sheep).